Consider the following 522-residue polypeptide: Occludin (522 aa).

The interval 1–20 (MSSRPLESPPPYRPDEFKPN) is disordered. Residues 1–66 (MSSRPLESPP…KWTSPPGVIR (66 aa)) lie on the Cytoplasmic side of the membrane. Residues 60 to 269 (SPPGVIRILS…IIFFAVKTRR (210 aa)) enclose the MARVEL domain. A helical membrane pass occupies residues 67–89 (ILSMLIIVMCIAIFACVASTLAW). The Extracellular segment spans residues 90-135 (DRGYGTSLLGGSVGYPYGGSGFGSYGSGYGYGYGYGYGYGGYTDPR). The helical transmembrane segment at 136–160 (AAKGFMLAMAAFCFIAALVIFVTSV) threads the bilayer. Topologically, residues 161–170 (IRSEMSRTRR) are cytoplasmic. The helical transmembrane segment at 171 to 195 (YYLSVIIVSAILGIMVFIATIVYIM) threads the bilayer. The Extracellular segment spans residues 196 to 243 (GVNPTAQSSGSLYGSQIYALCNQFYTPAATGLYVDQYLYHYCVVDPQE). The cysteines at positions 216 and 237 are disulfide-linked. Residues 244–265 (AIAIVLGFMIIVAFALIIFFAV) traverse the membrane as a helical segment. The Cytoplasmic portion of the chain corresponds to 266–522 (KTRRKMDRYD…MVGDYDRQKT (257 aa)). Ser-302 carries the phosphoserine modification. Thr-305 carries the post-translational modification Phosphothreonine. Phosphoserine occurs at positions 313, 321, and 340. The segment at 360–407 (VDDFRQPRYSSGGNFETPSKRAPAKGRAGRSKRTEQDHYETDYTTGGE) is disordered. The span at 367–376 (RYSSGGNFET) shows a compositional bias: polar residues. Position 368 is a phosphotyrosine (Tyr-368). Residues Ser-369 and Ser-370 each carry the phosphoserine modification. Residues 381 to 390 (APAKGRAGRS) show a composition bias toward basic residues. Residues 391 to 400 (KRTEQDHYET) are compositionally biased toward basic and acidic residues. 2 positions are modified to phosphotyrosine: Tyr-398 and Tyr-402. Phosphothreonine; by PKC/PRKCH is present on residues Thr-403 and Thr-404. Ser-408 carries the post-translational modification Phosphoserine. In terms of domain architecture, OCEL spans 414–522 (EDWIREYPPI…MVGDYDRQKT (109 aa)). Positions 426 to 489 (DQQRQLYKRN…EYNRLKQVKG (64 aa)) form a coiled coil. A Phosphoserine modification is found at Ser-490.

Belongs to the ELL/occludin family. In terms of assembly, interacts with TJP1/ZO1. Interacts with VAPA. Interacts with CLDN1, CLDN6, CLDN9, CLDN11, CLDN12 and CLDN17. Interacts with PLSCR1. Interacts with LSR, ILDR1 and ILDR2. Interacts with TJP2/ZO2. Post-translationally, dephosphorylated by PTPRJ. The tyrosine phosphorylation on Tyr-398 and Tyr-402 reduces its ability to interact with TJP1. Phosphorylation at Ser-490 also attenuates the interaction with TJP1. (Microbial infection) Cleaved by S.pyogenes SpeB protease; leading to its degradation. Degradation by SpeB promotes bacterial translocation across the host epithelial barrier. As to expression, localized at tight junctions of both epithelial and endothelial cells. Highly expressed in kidney. Not detected in testis.

It localises to the cell membrane. Its subcellular location is the cell junction. It is found in the tight junction. Functionally, may play a role in the formation and regulation of the tight junction (TJ) paracellular permeability barrier. It is able to induce adhesion when expressed in cells lacking tight junctions. (Microbial infection) Acts as a coreceptor for hepatitis C virus (HCV) in hepatocytes. This Homo sapiens (Human) protein is Occludin (OCLN).